A 610-amino-acid chain; its full sequence is Protein SAN1 (610 aa).

Positions 1–10 (MSESGQEQNR) are enriched in polar residues. 2 disordered regions span residues 1–36 (MSES…NGGA) and 176–231 (VDST…PSIP). Positions 11-36 (GTNTSPNNAENNNNSNAASGPLNGGA) are enriched in low complexity. Residues 194–203 (EGTKKRKDNE) are compositionally biased toward basic and acidic residues. Positions 210-223 (TADNDSNPSITNAT) are enriched in polar residues. The RING-type zinc-finger motif lies at 240–280 (NDEETNPSYKHSPIKLPCGHIFGRECIYKWSRLENSCPLCR). Disordered regions lie at residues 318-348 (TAVN…ASSG), 360-453 (VPQN…TDPH), 471-502 (GTSD…TTQG), 514-554 (GHFT…GVAS), and 569-610 (NNNS…RSSQ). The span at 319-348 (AVNSTNENSSAPSENTSNTTVPTIGNASSG) shows a compositional bias: polar residues. Composition is skewed to low complexity over residues 384–406 (NGPS…NQSP) and 425–447 (PSAS…NTSS). Over residues 471–492 (GTSDTSATTAPGAQTVHNQGRN) the composition is skewed to polar residues. Over residues 493-502 (DSSSSDTTQG) the composition is skewed to low complexity. 2 stretches are compositionally biased toward polar residues: residues 533–554 (QQRG…GVAS) and 592–610 (DTTI…RSSQ).

Plays a specific role in mating-type regulation of yeast, by acting post-translationally to control the stability or activity of the SIR4 proteins. The protein is Protein SAN1 (SAN1) of Saccharomyces cerevisiae (strain ATCC 204508 / S288c) (Baker's yeast).